The primary structure comprises 155 residues: Ribosomal RNA large subunit methyltransferase H (155 aa).

S-adenosyl-L-methionine-binding positions include L72, G103, and 122-127 (LSPLTL).

This sequence belongs to the RNA methyltransferase RlmH family. Homodimer.

The protein resides in the cytoplasm. The enzyme catalyses pseudouridine(1915) in 23S rRNA + S-adenosyl-L-methionine = N(3)-methylpseudouridine(1915) in 23S rRNA + S-adenosyl-L-homocysteine + H(+). Specifically methylates the pseudouridine at position 1915 (m3Psi1915) in 23S rRNA. This Haemophilus influenzae (strain PittEE) protein is Ribosomal RNA large subunit methyltransferase H.